Consider the following 95-residue polypeptide: Protein TusB (95 aa).

The protein belongs to the DsrH/TusB family. In terms of assembly, heterohexamer, formed by a dimer of trimers. The hexameric TusBCD complex contains 2 copies each of TusB, TusC and TusD. The TusBCD complex interacts with TusE.

It localises to the cytoplasm. In terms of biological role, part of a sulfur-relay system required for 2-thiolation of 5-methylaminomethyl-2-thiouridine (mnm(5)s(2)U) at tRNA wobble positions. The polypeptide is Protein TusB (Escherichia coli (strain ATCC 8739 / DSM 1576 / NBRC 3972 / NCIMB 8545 / WDCM 00012 / Crooks)).